The sequence spans 504 residues: uncharacterized protein (504 aa).

A helical transmembrane segment spans residues Asn-6 to Phe-26.

The protein to M.jannaschii MJ1506 and MJ1561.

It localises to the membrane. This is an uncharacterized protein from Methanocaldococcus jannaschii (strain ATCC 43067 / DSM 2661 / JAL-1 / JCM 10045 / NBRC 100440) (Methanococcus jannaschii).